Consider the following 364-residue polypeptide: tRNA 2-selenouridine synthase (364 aa).

Positions 12-135 (FLNDRPMMDT…MRTFLLDTTE (124 aa)) constitute a Rhodanese domain. Cys95 serves as the catalytic S-selanylcysteine intermediate.

The protein belongs to the SelU family. As to quaternary structure, monomer.

It carries out the reaction 5-methylaminomethyl-2-thiouridine(34) in tRNA + selenophosphate + (2E)-geranyl diphosphate + H2O + H(+) = 5-methylaminomethyl-2-selenouridine(34) in tRNA + (2E)-thiogeraniol + phosphate + diphosphate. It catalyses the reaction 5-methylaminomethyl-2-thiouridine(34) in tRNA + (2E)-geranyl diphosphate = 5-methylaminomethyl-S-(2E)-geranyl-thiouridine(34) in tRNA + diphosphate. The catalysed reaction is 5-methylaminomethyl-S-(2E)-geranyl-thiouridine(34) in tRNA + selenophosphate + H(+) = 5-methylaminomethyl-2-(Se-phospho)selenouridine(34) in tRNA + (2E)-thiogeraniol. The enzyme catalyses 5-methylaminomethyl-2-(Se-phospho)selenouridine(34) in tRNA + H2O = 5-methylaminomethyl-2-selenouridine(34) in tRNA + phosphate. Involved in the post-transcriptional modification of the uridine at the wobble position (U34) of tRNA(Lys), tRNA(Glu) and tRNA(Gln). Catalyzes the conversion of 2-thiouridine (S2U-RNA) to 2-selenouridine (Se2U-RNA). Acts in a two-step process involving geranylation of 2-thiouridine (S2U) to S-geranyl-2-thiouridine (geS2U) and subsequent selenation of the latter derivative to 2-selenouridine (Se2U) in the tRNA chain. The sequence is that of tRNA 2-selenouridine synthase from Pseudomonas fluorescens (strain ATCC BAA-477 / NRRL B-23932 / Pf-5).